A 360-amino-acid polypeptide reads, in one-letter code: Type II methyltransferase M2.ScrFI (360 aa).

The SAM-dependent MTase C5-type domain occupies Leu-2 to Gln-360. Cys-127 is a catalytic residue.

Belongs to the class I-like SAM-binding methyltransferase superfamily. C5-methyltransferase family.

It carries out the reaction a 2'-deoxycytidine in DNA + S-adenosyl-L-methionine = a 5-methyl-2'-deoxycytidine in DNA + S-adenosyl-L-homocysteine + H(+). In terms of biological role, a methylase, recognizes the double-stranded sequence 5'-CCNGG-3', methylates C-2 on both strands, and protects the DNA from cleavage by the ScrFI endonuclease. This Lactococcus lactis subsp. cremoris (Streptococcus cremoris) protein is Type II methyltransferase M2.ScrFI (scrFIBM).